The chain runs to 113 residues: ATP-dependent Clp protease adapter protein ClpS (113 aa).

Residues 1–11 (MTRPTIPPGPP) are compositionally biased toward pro residues. Disordered stretches follow at residues 1 to 24 (MTRP…ERTE) and 92 to 113 (TAHA…SEGE).

It belongs to the ClpS family. Binds to the N-terminal domain of the chaperone ClpA.

Its function is as follows. Involved in the modulation of the specificity of the ClpAP-mediated ATP-dependent protein degradation. The protein is ATP-dependent Clp protease adapter protein ClpS of Deinococcus radiodurans (strain ATCC 13939 / DSM 20539 / JCM 16871 / CCUG 27074 / LMG 4051 / NBRC 15346 / NCIMB 9279 / VKM B-1422 / R1).